A 178-amino-acid polypeptide reads, in one-letter code: ATP-dependent protease subunit HslV (178 aa).

Residue Thr-7 is part of the active site. Na(+)-binding residues include Gly-162, Cys-165, and Thr-168.

It belongs to the peptidase T1B family. HslV subfamily. A double ring-shaped homohexamer of HslV is capped on each side by a ring-shaped HslU homohexamer. The assembly of the HslU/HslV complex is dependent on binding of ATP.

Its subcellular location is the cytoplasm. The catalysed reaction is ATP-dependent cleavage of peptide bonds with broad specificity.. Its activity is regulated as follows. Allosterically activated by HslU binding. Its function is as follows. Protease subunit of a proteasome-like degradation complex believed to be a general protein degrading machinery. This Burkholderia lata (strain ATCC 17760 / DSM 23089 / LMG 22485 / NCIMB 9086 / R18194 / 383) protein is ATP-dependent protease subunit HslV.